A 323-amino-acid polypeptide reads, in one-letter code: Protein REDOX 2 (323 aa).

Asp53 contributes to the NADP(+) binding site. Tyr58 functions as the Proton donor in the catalytic mechanism. A substrate-binding site is contributed by His121. NADP(+)-binding positions include 167-168 (SN), Gln189, 215-220 (WSPLLS), and 289-297 (DQIHEIPQR). The disordered stretch occupies residues 302–323 (GEEFMHPEGPIKSPEELWDGDL).

Belongs to the aldo/keto reductase family. In terms of assembly, monomer. As to expression, expressed in leaf epidermis.

The enzyme catalyses 15alpha-stemmadenine + NADP(+) = 17-dehydrostemmadenine + NADPH + 2 H(+). The protein operates within alkaloid biosynthesis. Component of iboga and aspidosperma monoterpenoid indole alkaloids (MIAs, e.g. tabersonine and catharanthine) biosynthesis pathway from 19E-geissoschizine. Catalyzes the second oxidation step of the unstable intermediate product resulting from the reaction triggered by the geissoschizine oxidase (GO) in the stemmadenine biosynthesis process from 19E-geissoschizine. This is Protein REDOX 2 from Catharanthus roseus (Madagascar periwinkle).